Here is a 402-residue protein sequence, read N- to C-terminus: Mediator of RNA polymerase II transcription subunit 27 (402 aa).

A compositionally biased stretch (polar residues) spans 1 to 23; it reads MQTLHQSQLLQNPAEAANNQSES. A disordered region spans residues 1–30; the sequence is MQTLHQSQLLQNPAEAANNQSESDAPPKQV. The stretch at 28-49 forms a coiled coil; that stretch reads KQVAQAMERLNQAARVIADIRL.

This sequence belongs to the Mediator complex subunit 27 family. Component of the Mediator complex.

It localises to the nucleus. In terms of biological role, component of the Mediator complex, a coactivator involved in the regulated transcription of nearly all RNA polymerase II-dependent genes. Mediator functions as a bridge to convey information from gene-specific regulatory proteins to the basal RNA polymerase II transcription machinery. The Mediator complex, having a compact conformation in its free form, is recruited to promoters by direct interactions with regulatory proteins and serves for the assembly of a functional preinitiation complex with RNA polymerase II and the general transcription factors. The polypeptide is Mediator of RNA polymerase II transcription subunit 27 (MED27) (Arabidopsis thaliana (Mouse-ear cress)).